The chain runs to 218 residues: Cytidylate kinase (218 aa).

Gly-11–Thr-19 lines the ATP pocket.

Belongs to the cytidylate kinase family. Type 1 subfamily.

It is found in the cytoplasm. The enzyme catalyses CMP + ATP = CDP + ADP. The catalysed reaction is dCMP + ATP = dCDP + ADP. This chain is Cytidylate kinase, found in Mycoplasmopsis synoviae (strain 53) (Mycoplasma synoviae).